The chain runs to 716 residues: Polyribonucleotide nucleotidyltransferase (716 aa).

Mg(2+)-binding residues include aspartate 495 and aspartate 501. The 60-residue stretch at 562-621 (PRLFRIQINPEQIGLVIGPGGKTIRSITEQTGAKIDIEDTGAVTISAVDADSALRAKSII) folds into the KH domain. Residues 631–699 (GDVYIGKVTR…QKGRVNLTRK (69 aa)) enclose the S1 motif domain.

It belongs to the polyribonucleotide nucleotidyltransferase family. Requires Mg(2+) as cofactor.

The protein localises to the cytoplasm. The catalysed reaction is RNA(n+1) + phosphate = RNA(n) + a ribonucleoside 5'-diphosphate. Functionally, involved in mRNA degradation. Catalyzes the phosphorolysis of single-stranded polyribonucleotides processively in the 3'- to 5'-direction. The polypeptide is Polyribonucleotide nucleotidyltransferase (Synechococcus elongatus (strain ATCC 33912 / PCC 7942 / FACHB-805) (Anacystis nidulans R2)).